The primary structure comprises 360 residues: Alanine racemase (360 aa).

Lys34 (proton acceptor; specific for D-alanine) is an active-site residue. Position 34 is an N6-(pyridoxal phosphate)lysine (Lys34). Residue Arg129 coordinates substrate. Tyr254 acts as the Proton acceptor; specific for L-alanine in catalysis. Position 302 (Met302) interacts with substrate.

This sequence belongs to the alanine racemase family. Pyridoxal 5'-phosphate is required as a cofactor.

The catalysed reaction is L-alanine = D-alanine. The protein operates within amino-acid biosynthesis; D-alanine biosynthesis; D-alanine from L-alanine: step 1/1. In terms of biological role, catalyzes the interconversion of L-alanine and D-alanine. May also act on other amino acids. The polypeptide is Alanine racemase (alr) (Pectobacterium carotovorum subsp. carotovorum (strain PC1)).